The chain runs to 211 residues: Probable endo-1,4-beta-xylanase 5 (211 aa).

Residues 1–16 (MKVTAAFASLLLTAFA) form the signal peptide. Positions 19–210 (APEPVLVSRS…GAGSASVTIS (192 aa)) constitute a GH11 domain. Glu-106 (nucleophile) is an active-site residue. The active-site Proton donor is Glu-197.

The protein belongs to the glycosyl hydrolase 11 (cellulase G) family.

It is found in the secreted. It catalyses the reaction Endohydrolysis of (1-&gt;4)-beta-D-xylosidic linkages in xylans.. Its pathway is glycan degradation; xylan degradation. Endo-1,4-beta-xylanase involved in the hydrolysis of xylan, a major structural heterogeneous polysaccharide found in plant biomass representing the second most abundant polysaccharide in the biosphere, after cellulose. The protein is Probable endo-1,4-beta-xylanase 5 (XYN5) of Aspergillus niger (strain ATCC MYA-4892 / CBS 513.88 / FGSC A1513).